The following is a 368-amino-acid chain: Protein 5 (368 aa).

The chain is Protein 5 from Lettuce big-vein associated virus (isolate Japan/Kagawa) (LBVaV).